The sequence spans 768 residues: Translation factor GUF1 homolog, mitochondrial (768 aa).

The transit peptide at 1–29 (MRLWNRFSRLGNLLCACAACGCSFTPWRC) directs the protein to the mitochondrion. Residues 110–293 (SNIRNVAVVA…AIIERVPSPS (184 aa)) form the tr-type G domain. Residues 119–126 (AHVDHGKT), 184–188 (DTPGH), and 238–241 (TKMD) each bind GTP.

Belongs to the TRAFAC class translation factor GTPase superfamily. Classic translation factor GTPase family. LepA subfamily.

Its subcellular location is the mitochondrion inner membrane. The catalysed reaction is GTP + H2O = GDP + phosphate + H(+). Promotes mitochondrial protein synthesis. May act as a fidelity factor of the translation reaction, by catalyzing a one-codon backward translocation of tRNAs on improperly translocated ribosomes. Binds to mitochondrial ribosomes in a GTP-dependent manner. This chain is Translation factor GUF1 homolog, mitochondrial, found in Trypanosoma brucei brucei (strain 927/4 GUTat10.1).